Reading from the N-terminus, the 186-residue chain is Tegument protein UL55 (186 aa).

This sequence belongs to the alphaherpesvirinae HHV-1 UL55 family.

It localises to the virion tegument. Its subcellular location is the host nucleus matrix. The chain is Tegument protein UL55 from Human herpesvirus 2 (strain HG52) (HHV-2).